The primary structure comprises 369 residues: RNA-binding protein rnp24 (369 aa).

Disordered regions lie at residues 1-77 (MEPI…KKKE), 200-219 (TDFSGRPSKPANTLSKTASI), and 304-369 (RMRN…IKFD). An RRM 1 domain is found at 105 to 206 (WGIWVGNLSF…KSNTDFSGRP (102 aa)). The span at 209-219 (PANTLSKTASI) shows a compositional bias: polar residues. In terms of domain architecture, RRM 2 spans 228-310 (SILFVGNLDF…RSKRMRNKSP (83 aa)). The span at 325-341 (QEDKPNFKRARKIDPRS) shows a compositional bias: basic and acidic residues. Positions 346-357 (AALAKAQRSSAA) are enriched in low complexity.

It localises to the nucleus. The sequence is that of RNA-binding protein rnp24 (rnp24) from Schizosaccharomyces pombe (strain 972 / ATCC 24843) (Fission yeast).